The primary structure comprises 249 residues: ATP synthase subunit a (249 aa).

The next 6 helical transmembrane spans lie at 30–50, 84–104, 114–134, 143–163, 196–216, and 221–241; these read SAYM…GVAG, FFPL…VGII, LIVT…YGFY, IFVP…IEVF, LLAG…GMVI, and LELL…CIYL.

Belongs to the ATPase A chain family. In terms of assembly, F-type ATPases have 2 components, CF(1) - the catalytic core - and CF(0) - the membrane proton channel. CF(1) has five subunits: alpha(3), beta(3), gamma(1), delta(1), epsilon(1). CF(0) has four main subunits: a, b, b' and c.

Its subcellular location is the cell inner membrane. Its function is as follows. Key component of the proton channel; it plays a direct role in the translocation of protons across the membrane. This is ATP synthase subunit a from Rhodopseudomonas palustris (strain BisB18).